The chain runs to 501 residues: Lysine--tRNA ligase (501 aa).

Mg(2+)-binding residues include Glu402 and Glu409.

It belongs to the class-II aminoacyl-tRNA synthetase family. Homodimer. It depends on Mg(2+) as a cofactor.

The protein localises to the cytoplasm. The catalysed reaction is tRNA(Lys) + L-lysine + ATP = L-lysyl-tRNA(Lys) + AMP + diphosphate. The chain is Lysine--tRNA ligase from Helicobacter pylori (strain G27).